Consider the following 61-residue polypeptide: Probable tautomerase BH3814 (61 aa).

P2 acts as the Proton acceptor; via imino nitrogen in catalysis.

This sequence belongs to the 4-oxalocrotonate tautomerase family.

The polypeptide is Probable tautomerase BH3814 (Halalkalibacterium halodurans (strain ATCC BAA-125 / DSM 18197 / FERM 7344 / JCM 9153 / C-125) (Bacillus halodurans)).